A 72-amino-acid chain; its full sequence is Large ribosomal subunit protein bL31 (72 aa).

Residues Cys17, Cys19, Cys37, and Cys40 each coordinate Zn(2+).

The protein belongs to the bacterial ribosomal protein bL31 family. Type A subfamily. In terms of assembly, part of the 50S ribosomal subunit. The cofactor is Zn(2+).

Functionally, binds the 23S rRNA. The protein is Large ribosomal subunit protein bL31 of Clostridium botulinum (strain ATCC 19397 / Type A).